We begin with the raw amino-acid sequence, 505 residues long: MTAQASEARELAAVIGLEVHVQLETETKIFCGCSTDVADAEPNTHTCPVCLGLPGALPVVNEGAVEAAVKVGKAIDADIPAETTFHRKNYYYPDLPKNFQITQYDSPICQDGELEFSVESERRSVDIRRAHLEEDPGSIKHVREGSGPLESRTCSIERADYTLIDYNRAGTPLMEIVTEPDFRAPGEVRSFLEKLEEVLEYLGVFDATRDGSLRIDANLSLVDASEVGEDGDIDKSVLEDANRTEVKNISSHKGAEQALSFEASRQRKLIQSGRAVEQETRHFNETHGNTVSMRSKEEEKDYRYFREADLPPLRVSHWKDEVPIPELPDARRERFVEEYGLSEEAASKLTSTKQVADFFEDVAERFDANLAATWVADNLLGELNYRDMAITDIDDRFDEVTQLVALVAEDEITAKNAHETVLREMLDTGDDPDTVVDREGLGKTSGDEVQQAVVEAIDENPDAVEDYHSGEGGAINFLVGQVMEKTGGSADPGDVNGLLREELES.

Belongs to the GatB/GatE family. GatB subfamily. Heterotrimer of A, B and C subunits.

The enzyme catalyses L-glutamyl-tRNA(Gln) + L-glutamine + ATP + H2O = L-glutaminyl-tRNA(Gln) + L-glutamate + ADP + phosphate + H(+). It carries out the reaction L-aspartyl-tRNA(Asn) + L-glutamine + ATP + H2O = L-asparaginyl-tRNA(Asn) + L-glutamate + ADP + phosphate + 2 H(+). Allows the formation of correctly charged Asn-tRNA(Asn) or Gln-tRNA(Gln) through the transamidation of misacylated Asp-tRNA(Asn) or Glu-tRNA(Gln) in organisms which lack either or both of asparaginyl-tRNA or glutaminyl-tRNA synthetases. The reaction takes place in the presence of glutamine and ATP through an activated phospho-Asp-tRNA(Asn) or phospho-Glu-tRNA(Gln). This chain is Aspartyl/glutamyl-tRNA(Asn/Gln) amidotransferase subunit B, found in Haloarcula marismortui (strain ATCC 43049 / DSM 3752 / JCM 8966 / VKM B-1809) (Halobacterium marismortui).